We begin with the raw amino-acid sequence, 455 residues long: Protein U54 (455 aa).

Belongs to the herpesviridae UL82 family.

The protein is Protein U54 (U54) of Homo sapiens (Human).